The sequence spans 685 residues: DNA ligase (685 aa).

NAD(+) contacts are provided by residues 34–38, 83–84, and glutamate 113; these read DAVFD and SL. Lysine 115 serves as the catalytic N6-AMP-lysine intermediate. Arginine 136, glutamate 173, lysine 297, and lysine 321 together coordinate NAD(+). 4 residues coordinate Zn(2+): cysteine 415, cysteine 418, cysteine 433, and cysteine 438. The region spanning 607–685 is the BRCT domain; the sequence is QEKLQFSGKT…EQELMTLISN (79 aa).

This sequence belongs to the NAD-dependent DNA ligase family. LigA subfamily. Mg(2+) is required as a cofactor. The cofactor is Mn(2+).

It carries out the reaction NAD(+) + (deoxyribonucleotide)n-3'-hydroxyl + 5'-phospho-(deoxyribonucleotide)m = (deoxyribonucleotide)n+m + AMP + beta-nicotinamide D-nucleotide.. Its function is as follows. DNA ligase that catalyzes the formation of phosphodiester linkages between 5'-phosphoryl and 3'-hydroxyl groups in double-stranded DNA using NAD as a coenzyme and as the energy source for the reaction. It is essential for DNA replication and repair of damaged DNA. The sequence is that of DNA ligase from Prochlorococcus marinus (strain SARG / CCMP1375 / SS120).